Here is a 113-residue protein sequence, read N- to C-terminus: Hydrogenase maturation factor HypA (113 aa).

Ni(2+) is bound at residue histidine 2. Cysteine 73, cysteine 76, cysteine 89, and cysteine 92 together coordinate Zn(2+).

This sequence belongs to the HypA/HybF family.

Involved in the maturation of [NiFe] hydrogenases. Required for nickel insertion into the metal center of the hydrogenase. In Cereibacter sphaeroides (strain ATCC 17023 / DSM 158 / JCM 6121 / CCUG 31486 / LMG 2827 / NBRC 12203 / NCIMB 8253 / ATH 2.4.1.) (Rhodobacter sphaeroides), this protein is Hydrogenase maturation factor HypA.